The primary structure comprises 537 residues: Lariat debranching enzyme (537 aa).

A divalent metal cation-binding residues include Cys8, His10, Asp39, and Asn84. The lariat recognition loop stretch occupies residues 124–154; it reads SGIYKGHDFLRGHHEFPPYTESTCRSVYHVR. 3 residues coordinate a divalent metal cation: His174, His226, and His228. Disordered regions lie at residues 242–272 and 473–537; these read KAPT…SRLP and TAAE…EDDD. The segment covering 251–260 has biased composition (low complexity); it reads SSSSSSSSSS.

The protein belongs to the lariat debranching enzyme family. The cofactor is Fe(2+). It depends on Zn(2+) as a cofactor. Mn(2+) serves as cofactor.

It localises to the nucleus. Active in presence of diverse metals including Fe(2+), Zn(2+), Mn(2+). Binds two metal cations in two adjacent alpha and beta metal-binding pockets. Cleaves the 2'-5' phosphodiester linkage at the branch point of lariat intron pre-mRNAs after splicing and converts them into linear molecules that are subsequently degraded. It thereby facilitates ribonucleotide turnover. The sequence is that of Lariat debranching enzyme (DBR1) from Drosophila pseudoobscura pseudoobscura (Fruit fly).